A 345-amino-acid chain; its full sequence is Ribonucleoside-diphosphate reductase small chain 2 (345 aa).

M1 carries the post-translational modification N-acetylmethionine. Y131 is a catalytic residue. A phosphoserine mark is found at S169 and S332. T334 carries the phosphothreonine modification. S336 carries the phosphoserine modification. Residue K337 forms a Glycyl lysine isopeptide (Lys-Gly) (interchain with G-Cter in ubiquitin) linkage.

The protein belongs to the ribonucleoside diphosphate reductase small chain family. Heterotetramer of two large (R1) and two small (R2) subunits. S.cerevisiae has two different R1 subunits (RNR1 and RNR3) and two different R2 subunits (RNR2 and RNR4). The functional form of the small subunits is a RNR2-RNR4 heterodimer, where RNR2 provides the iron-radical center and RNR4 is required for proper folding of RNR2 and assembly with the large subunits. Under normal growth conditions, the active form of the large subunits is a homodimer of the constitutively expressed RNR1. In damaged cells or cells arrested for DNA synthesis, the reductase consists of multiple species because of the association of the small subunits (RNR2-RNR4) with either the RNR1 homodimer or a heterodimer of RNR1 and the damage-inducible RNR3. Interacts with DIF1.

Its subcellular location is the nucleus. The catalysed reaction is a 2'-deoxyribonucleoside 5'-diphosphate + [thioredoxin]-disulfide + H2O = a ribonucleoside 5'-diphosphate + [thioredoxin]-dithiol. Provides the precursors necessary for DNA synthesis. Catalyzes the biosynthesis of deoxyribonucleotides from the corresponding ribonucleotides. RNR4 is required for proper folding of RNR2 and assembly with the large subunits. This chain is Ribonucleoside-diphosphate reductase small chain 2 (RNR4), found in Saccharomyces cerevisiae (strain ATCC 204508 / S288c) (Baker's yeast).